A 225-amino-acid polypeptide reads, in one-letter code: Phosphoribosylformylglycinamidine synthase subunit PurQ (225 aa).

The Glutamine amidotransferase type-1 domain maps to 5–225 (SAVITFPGSN…ESVVRGLVEA (221 aa)). The active-site Nucleophile is C89. Residues H197 and E199 contribute to the active site.

Part of the FGAM synthase complex composed of 1 PurL, 1 PurQ and 2 PurS subunits.

The protein localises to the cytoplasm. The enzyme catalyses N(2)-formyl-N(1)-(5-phospho-beta-D-ribosyl)glycinamide + L-glutamine + ATP + H2O = 2-formamido-N(1)-(5-O-phospho-beta-D-ribosyl)acetamidine + L-glutamate + ADP + phosphate + H(+). It catalyses the reaction L-glutamine + H2O = L-glutamate + NH4(+). The protein operates within purine metabolism; IMP biosynthesis via de novo pathway; 5-amino-1-(5-phospho-D-ribosyl)imidazole from N(2)-formyl-N(1)-(5-phospho-D-ribosyl)glycinamide: step 1/2. In terms of biological role, part of the phosphoribosylformylglycinamidine synthase complex involved in the purines biosynthetic pathway. Catalyzes the ATP-dependent conversion of formylglycinamide ribonucleotide (FGAR) and glutamine to yield formylglycinamidine ribonucleotide (FGAM) and glutamate. The FGAM synthase complex is composed of three subunits. PurQ produces an ammonia molecule by converting glutamine to glutamate. PurL transfers the ammonia molecule to FGAR to form FGAM in an ATP-dependent manner. PurS interacts with PurQ and PurL and is thought to assist in the transfer of the ammonia molecule from PurQ to PurL. This is Phosphoribosylformylglycinamidine synthase subunit PurQ from Novosphingobium aromaticivorans (strain ATCC 700278 / DSM 12444 / CCUG 56034 / CIP 105152 / NBRC 16084 / F199).